Here is a 293-residue protein sequence, read N- to C-terminus: Phosphatidylglycerol--prolipoprotein diacylglyceryl transferase (293 aa).

4 helical membrane-spanning segments follow: residues 45 to 65 (FELR…YFVA), 81 to 101 (ELIF…YVLF), 115 to 135 (IWEG…TGFL), and 144 to 164 (FTFL…QAIG). R165 is a binding site for a 1,2-diacyl-sn-glycero-3-phospho-(1'-sn-glycerol). The next 3 helical transmembrane spans lie at 204 to 224 (PTFL…SVYF), 231 to 249 (HGEV…RIVI), and 262 to 282 (IKAA…GFLI).

Belongs to the Lgt family.

It localises to the cell inner membrane. It catalyses the reaction L-cysteinyl-[prolipoprotein] + a 1,2-diacyl-sn-glycero-3-phospho-(1'-sn-glycerol) = an S-1,2-diacyl-sn-glyceryl-L-cysteinyl-[prolipoprotein] + sn-glycerol 1-phosphate + H(+). The protein operates within protein modification; lipoprotein biosynthesis (diacylglyceryl transfer). Catalyzes the transfer of the diacylglyceryl group from phosphatidylglycerol to the sulfhydryl group of the N-terminal cysteine of a prolipoprotein, the first step in the formation of mature lipoproteins. The sequence is that of Phosphatidylglycerol--prolipoprotein diacylglyceryl transferase from Thermotoga maritima (strain ATCC 43589 / DSM 3109 / JCM 10099 / NBRC 100826 / MSB8).